The sequence spans 395 residues: Cytochrome b561 and DOMON domain-containing protein At5g47530 (395 aa).

A signal peptide spans methionine 1–alanine 24. Residues leucine 47–glycine 162 enclose the DOMON domain. The 196-residue stretch at glycine 176–isoleucine 371 folds into the Cytochrome b561 domain. 2 consecutive transmembrane segments (helical) span residues isoleucine 210–alanine 230 and alanine 242–tryptophan 262. Heme b contacts are provided by histidine 211, histidine 247, and histidine 280. A helical transmembrane segment spans residues alanine 282–proline 302. A heme b-binding site is contributed by histidine 316. Helical transmembrane passes span threonine 318 to leucine 338 and isoleucine 351 to isoleucine 371.

Heme b serves as cofactor.

Its subcellular location is the membrane. May act as a catecholamine-responsive trans-membrane electron transporter. This is Cytochrome b561 and DOMON domain-containing protein At5g47530 from Arabidopsis thaliana (Mouse-ear cress).